A 380-amino-acid polypeptide reads, in one-letter code: Guanine nucleotide-binding protein subunit beta (380 aa).

7 WD repeats span residues glycine 64–alanine 103, leucine 106–glycine 145, glycine 155–isoleucine 195, glycine 203–arginine 243, glycine 247–valine 286, asparagine 296–asparagine 335, and serine 342–valine 380.

This sequence belongs to the WD repeat G protein beta family. As to quaternary structure, g proteins are composed of 3 units, alpha, beta and gamma. Interacts with the gamma subunits RGG1 and RGG2.

The protein resides in the cell membrane. In terms of biological role, guanine nucleotide-binding proteins (G proteins) are involved as modulators or transducers in various transmembrane signaling systems. The beta and gamma chains are required for the GTPase activity, for replacement of GDP by GTP, and for G protein-effector interaction. The chain is Guanine nucleotide-binding protein subunit beta from Oryza sativa subsp. indica (Rice).